The following is a 174-amino-acid chain: Guided entry of tail-anchored proteins factor 1 (174 aa).

Residues 1-8 lie on the Lumenal side of the membrane; that stretch reads MSSAAADH. Residues 9 to 29 form a helical membrane-spanning segment; that stretch reads WAWLLVLSFVFGCNVLRVLLP. Residues 30–99 lie on the Cytoplasmic side of the membrane; the sequence is SFSSFMSRVL…VKARTAQLAK (70 aa). The stretch at 39 to 94 forms a coiled coil; sequence LQKDAEQESQMRAEIQDMKQELSTVNMMDEFARYARLERKINKMTDKLKTHVKART. The tract at residues 39–97 is interaction with GET3/TRC40; sequence LQKDAEQESQMRAEIQDMKQELSTVNMMDEFARYARLERKINKMTDKLKTHVKARTAQL. A helical transmembrane segment spans residues 100 to 120; the sequence is IKWVISVAFYVLQAALMISLI. The Lumenal portion of the chain corresponds to 121 to 148; the sequence is WKYYSVPVAVVPSKWITPLDRLVAFPTR. Residues 149–169 traverse the membrane as a helical segment; that stretch reads VAGGVGITCWILVCNKVVAIV. At 170–174 the chain is on the cytoplasmic side; sequence LHPFS.

It belongs to the WRB/GET1 family. In terms of assembly, component of the Golgi to ER traffic (GET) complex, which is composed of GET1/WRB, CAMLG/GET2 and GET3. Within the complex, GET1 and CAMLG form a heterotetramer which is stabilized by phosphatidylinositol binding and which binds to the GET3 homodimer. Interacts with CAMLG (via C-terminus). GET3 shows a higher affinity for CAMLG than for GET1.

The protein localises to the endoplasmic reticulum membrane. Functionally, required for the post-translational delivery of tail-anchored (TA) proteins to the endoplasmic reticulum. Together with CAMLG/GET2, acts as a membrane receptor for soluble GET3/TRC40, which recognizes and selectively binds the transmembrane domain of TA proteins in the cytosol. Required to ensure correct topology and ER insertion of CAMLG. This Pongo abelii (Sumatran orangutan) protein is Guided entry of tail-anchored proteins factor 1.